We begin with the raw amino-acid sequence, 237 residues long: Putative HTH-type transcriptional regulator ycf28 (237 aa).

The HTH crp-type domain maps to 155 to 228 (KSITNRLISL…KKKVIIHDPI (74 aa)). The H-T-H motif DNA-binding region spans 188–207 (HKVLAQIIGSNRVSITRIIS).

The protein localises to the plastid. It is found in the chloroplast. In Porphyra purpurea (Red seaweed), this protein is Putative HTH-type transcriptional regulator ycf28 (ycf28).